Reading from the N-terminus, the 449-residue chain is Hyaluronidase-3 (449 aa).

An N-terminal signal peptide occupies residues 1–23 (MYHIWIKFLAAWIFLKKFNGVHV). 2 disulfides stabilise this stretch: cysteine 47-cysteine 340 and cysteine 211-cysteine 227. Residues asparagine 67, asparagine 103, and asparagine 111 are each glycosylated (N-linked (GlcNAc...) asparagine). Glutamate 135 acts as the Proton donor in catalysis. Residue asparagine 153 is glycosylated (N-linked (GlcNAc...) asparagine). N-linked (GlcNAc...) asparagine glycosylation is present at asparagine 357. Disulfide bonds link cysteine 365/cysteine 376, cysteine 370/cysteine 427, and cysteine 429/cysteine 438. Asparagine 401 carries N-linked (GlcNAc...) asparagine glycosylation. An EGF-like domain is found at 427–438 (CQCYQGWKGLYC).

This sequence belongs to the glycosyl hydrolase 56 family. As to quaternary structure, monomer. Expressed by the venom gland.

Its subcellular location is the secreted. It carries out the reaction Random hydrolysis of (1-&gt;4)-linkages between N-acetyl-beta-D-glucosamine and D-glucuronate residues in hyaluronate.. Snake venom endo-hyaluronidase that degrades hyaluronan to smaller oligosaccharide fragments. In venom, it is not toxic by itself, but increases the diffusion of other venom proteins by degrading the extracellular matrix. In addition, it displays antiedematogenic activity. The polypeptide is Hyaluronidase-3 (Cerastes cerastes (Horned desert viper)).